Here is a 241-residue protein sequence, read N- to C-terminus: Large ribosomal subunit protein uL30 (241 aa).

The disordered stretch occupies residues 1–32 (MATTLKPETLQKKEKAQQKTAEERAAAKKVRK). Over residues 9–26 (TLQKKEKAQQKTAEERAA) the composition is skewed to basic and acidic residues.

Belongs to the universal ribosomal protein uL30 family. As to quaternary structure, component of the large ribosomal subunit. Mature ribosomes consist of a small (40S) and a large (60S) subunit. The 40S subunit contains about 32 different proteins and 1 molecule of RNA (18S). The 60S subunit contains 45 different proteins and 3 molecules of RNA (25S, 5.8S and 5S).

The protein localises to the cytoplasm. Its function is as follows. Component of the ribosome, a large ribonucleoprotein complex responsible for the synthesis of proteins in the cell. The small ribosomal subunit (SSU) binds messenger RNAs (mRNAs) and translates the encoded message by selecting cognate aminoacyl-transfer RNA (tRNA) molecules. The large subunit (LSU) contains the ribosomal catalytic site termed the peptidyl transferase center (PTC), which catalyzes the formation of peptide bonds, thereby polymerizing the amino acids delivered by tRNAs into a polypeptide chain. The nascent polypeptides leave the ribosome through a tunnel in the LSU and interact with protein factors that function in enzymatic processing, targeting, and the membrane insertion of nascent chains at the exit of the ribosomal tunnel. This is Large ribosomal subunit protein uL30 from Candida albicans (strain SC5314 / ATCC MYA-2876) (Yeast).